Consider the following 275-residue polypeptide: Malonyl-[acyl-carrier protein] O-methyltransferase (275 aa).

It belongs to the methyltransferase superfamily.

The enzyme catalyses malonyl-[ACP] + S-adenosyl-L-methionine = malonyl-[ACP] methyl ester + S-adenosyl-L-homocysteine. Its pathway is cofactor biosynthesis; biotin biosynthesis. In terms of biological role, converts the free carboxyl group of a malonyl-thioester to its methyl ester by transfer of a methyl group from S-adenosyl-L-methionine (SAM). It allows to synthesize pimeloyl-ACP via the fatty acid synthetic pathway. This is Malonyl-[acyl-carrier protein] O-methyltransferase from Methylococcus capsulatus (strain ATCC 33009 / NCIMB 11132 / Bath).